Here is a 283-residue protein sequence, read N- to C-terminus: ATP phosphoribosyltransferase (283 aa).

Belongs to the ATP phosphoribosyltransferase family. Long subfamily. The cofactor is Mg(2+).

It is found in the cytoplasm. It carries out the reaction 1-(5-phospho-beta-D-ribosyl)-ATP + diphosphate = 5-phospho-alpha-D-ribose 1-diphosphate + ATP. Its pathway is amino-acid biosynthesis; L-histidine biosynthesis; L-histidine from 5-phospho-alpha-D-ribose 1-diphosphate: step 1/9. Feedback inhibited by histidine. Its function is as follows. Catalyzes the condensation of ATP and 5-phosphoribose 1-diphosphate to form N'-(5'-phosphoribosyl)-ATP (PR-ATP). Has a crucial role in the pathway because the rate of histidine biosynthesis seems to be controlled primarily by regulation of HisG enzymatic activity. This Bifidobacterium longum subsp. infantis (strain ATCC 15697 / DSM 20088 / JCM 1222 / NCTC 11817 / S12) protein is ATP phosphoribosyltransferase.